The sequence spans 453 residues: Ribulose bisphosphate carboxylase large chain (453 aa).

A propeptide spanning residues 1–2 (MS) is cleaved from the precursor. At Pro-3 the chain carries N-acetylproline. Residue Lys-14 is modified to N6,N6,N6-trimethyllysine. 2 residues coordinate substrate: Asn-123 and Thr-173. Lys-175 acts as the Proton acceptor in catalysis. Lys-177 lines the substrate pocket. Mg(2+)-binding residues include Lys-201, Asp-203, and Glu-204. Lys-201 is modified (N6-carboxylysine). Residue His-294 is the Proton acceptor of the active site. The substrate site is built by Arg-295, His-327, and Ser-379.

It belongs to the RuBisCO large chain family. Type I subfamily. As to quaternary structure, heterohexadecamer of 8 large chains and 8 small chains; disulfide-linked. The disulfide link is formed within the large subunit homodimers. Mg(2+) serves as cofactor. The disulfide bond which can form in the large chain dimeric partners within the hexadecamer appears to be associated with oxidative stress and protein turnover.

The protein localises to the plastid. It is found in the chloroplast. The enzyme catalyses 2 (2R)-3-phosphoglycerate + 2 H(+) = D-ribulose 1,5-bisphosphate + CO2 + H2O. The catalysed reaction is D-ribulose 1,5-bisphosphate + O2 = 2-phosphoglycolate + (2R)-3-phosphoglycerate + 2 H(+). In terms of biological role, ruBisCO catalyzes two reactions: the carboxylation of D-ribulose 1,5-bisphosphate, the primary event in carbon dioxide fixation, as well as the oxidative fragmentation of the pentose substrate in the photorespiration process. Both reactions occur simultaneously and in competition at the same active site. This Asperula laevigata (Smooth woodruff) protein is Ribulose bisphosphate carboxylase large chain.